The primary structure comprises 482 residues: ATP synthase subunit beta, chloroplastic (482 aa).

168-175 (GGAGVGKT) is an ATP binding site.

This sequence belongs to the ATPase alpha/beta chains family. In terms of assembly, F-type ATPases have 2 components, CF(1) - the catalytic core - and CF(0) - the membrane proton channel. CF(1) has five subunits: alpha(3), beta(3), gamma(1), delta(1), epsilon(1). CF(0) has four main subunits: a(1), b(1), b'(1) and c(9-12).

It localises to the plastid. Its subcellular location is the chloroplast thylakoid membrane. The catalysed reaction is ATP + H2O + 4 H(+)(in) = ADP + phosphate + 5 H(+)(out). Produces ATP from ADP in the presence of a proton gradient across the membrane. The catalytic sites are hosted primarily by the beta subunits. The polypeptide is ATP synthase subunit beta, chloroplastic (Gnetum parvifolium (Small-leaved jointfir)).